A 74-amino-acid chain; its full sequence is Kappa-scoloptoxin(07)-Ssm2d (74 aa).

The signal sequence occupies residues 1–19; the sequence is MLVFYALLFVTVFSNTVMG. Positions 20-41 are excised as a propeptide; the sequence is ATIDKPIPKPILREAIEEIEVN.

This sequence belongs to the scoloptoxin-07 family. Contains 3 disulfide bonds. In terms of tissue distribution, expressed by the venom gland.

It localises to the secreted. Its function is as follows. Inhibits voltage-gated potassium channels. This Scolopendra mutilans (Chinese red-headed centipede) protein is Kappa-scoloptoxin(07)-Ssm2d.